A 406-amino-acid chain; its full sequence is Nodal homolog (406 aa).

An N-terminal signal peptide occupies residues 1–18; that stretch reads MAFLTAVLYLGFACISQG. Residues 19 to 281 constitute a propeptide that is removed on maturation; the sequence is LPTWPDRVES…RVPGIRRHRR (263 aa). Residues Asn-71, Asn-136, and Asn-172 are each glycosylated (N-linked (GlcNAc...) asparagine). Residues 195–222 are disordered; it reads KERAERGSGMSNAEFIDAPGPSQQYNPH. 3 disulfide bridges follow: Cys-306–Cys-372, Cys-335–Cys-403, and Cys-339–Cys-405. Asn-344 is a glycosylation site (N-linked (GlcNAc...) asparagine).

The protein belongs to the TGF-beta family. In terms of assembly, homodimer; disulfide-linked. Interacts with, and is inhibited by cer1 and gdf10/bmp3b. In the first phase of expression, localized to the vegetal region of the blastula. During gastrulation (stage 10.5), this expression disappears and instead becomes localized to the dorsal marginal zone, with enrichment in the organizer. During the second phase of expression in neurulae and tailbud embryos, expression restarts firstly in two symmetric patches near the posterior end of the notochord, and then in a large asymmetrical domain in the left lateral plate mesoderm.

Its subcellular location is the secreted. Cooperation and regulatory loops of multiple nodals are essential for mesendoderm patterning in early embryos. Essential for mesoderm formation and axial patterning during embryonic development. Activates the activin-like signaling pathway to induce dorsal and ventral mesoderm in animal cap ectoderm. In addition, also dorsalizes ventral marginal zone (VMZ) tissues during gastrulation. Acts in a downstream signaling cascade via cripto and cer1 to mediate cardiogenesis in embryonic mesoderm. Directs the orientation of the left-right axis by driving the left-specific gene cascade in the left lateral plate mesoderm. This chain is Nodal homolog, found in Xenopus laevis (African clawed frog).